The following is a 497-amino-acid chain: Guanosine-5'-triphosphate,3'-diphosphate pyrophosphatase (497 aa).

It belongs to the GppA/Ppx family. GppA subfamily.

The enzyme catalyses guanosine 3'-diphosphate 5'-triphosphate + H2O = guanosine 3',5'-bis(diphosphate) + phosphate + H(+). It functions in the pathway purine metabolism; ppGpp biosynthesis; ppGpp from GTP: step 2/2. Functionally, catalyzes the conversion of pppGpp to ppGpp. Guanosine pentaphosphate (pppGpp) is a cytoplasmic signaling molecule which together with ppGpp controls the 'stringent response', an adaptive process that allows bacteria to respond to amino acid starvation, resulting in the coordinated regulation of numerous cellular activities. The polypeptide is Guanosine-5'-triphosphate,3'-diphosphate pyrophosphatase (Vibrio atlanticus (strain LGP32) (Vibrio splendidus (strain Mel32))).